The following is a 184-amino-acid chain: Late embryogenesis abundant protein (184 aa).

A disordered region spans residues 49–184 (TGNIAEYPTE…KLPGHHNHHP (136 aa)). Over residues 60–86 (PPAGVAAGTGAAATTAAGVTTSETTTG) the composition is skewed to low complexity. Basic and acidic residues-rich tracts occupy residues 87–98 (QEHHGSLGEHLR) and 122–138 (KDKIKDKLGGGKHKDEQ). The span at 139-159 (TPTTATTTGPTTTTTTTGAAA) shows a compositional bias: low complexity. Positions 160-177 (DQHHEKKGILEKIKEKLP) are enriched in basic and acidic residues.

It belongs to the plant dehydrin family.

LEA protein are late embryogenesis abundant in higher plant seed embryos. There are two subsets of LEA proteins (5a, and 5b), the first ones are expressed when the cotyledon weight reach 80 mg and the second set are expressed above 100 mg. The function of those proteins is not known. The protein is Late embryogenesis abundant protein of Raphanus sativus (Radish).